A 313-amino-acid polypeptide reads, in one-letter code: Ribosomal RNA small subunit methyltransferase H (313 aa).

S-adenosyl-L-methionine contacts are provided by residues 33-35 (GGH), aspartate 53, phenylalanine 80, aspartate 101, and glutamine 108. Residues 282-313 (LVHNKPLTPSEAEIEQNPRARSAKLRVAQKLA) are disordered.

Belongs to the methyltransferase superfamily. RsmH family.

It is found in the cytoplasm. It catalyses the reaction cytidine(1402) in 16S rRNA + S-adenosyl-L-methionine = N(4)-methylcytidine(1402) in 16S rRNA + S-adenosyl-L-homocysteine + H(+). Functionally, specifically methylates the N4 position of cytidine in position 1402 (C1402) of 16S rRNA. The chain is Ribosomal RNA small subunit methyltransferase H from Magnetococcus marinus (strain ATCC BAA-1437 / JCM 17883 / MC-1).